The sequence spans 466 residues: Asparagine--tRNA ligase (466 aa).

It belongs to the class-II aminoacyl-tRNA synthetase family. As to quaternary structure, homodimer.

It localises to the cytoplasm. It carries out the reaction tRNA(Asn) + L-asparagine + ATP = L-asparaginyl-tRNA(Asn) + AMP + diphosphate + H(+). The polypeptide is Asparagine--tRNA ligase (Xylella fastidiosa (strain 9a5c)).